Here is a 498-residue protein sequence, read N- to C-terminus: Acetyl-coenzyme A carboxylase carboxyl transferase subunit beta, chloroplastic (498 aa).

Residues 228 to 498 form the CoA carboxyltransferase N-terminal domain; it reads LWVQCEICYG…LNHNLSRTLT (271 aa). Cys232, Cys235, Cys251, and Cys254 together coordinate Zn(2+). The segment at 232-254 adopts a C4-type zinc-finger fold; that stretch reads CEICYGLNYKKFFKSKMNICEQC.

The protein belongs to the AccD/PCCB family. As to quaternary structure, acetyl-CoA carboxylase is a heterohexamer composed of biotin carboxyl carrier protein, biotin carboxylase and 2 subunits each of ACCase subunit alpha and ACCase plastid-coded subunit beta (accD). Zn(2+) is required as a cofactor.

Its subcellular location is the plastid. The protein localises to the chloroplast stroma. It catalyses the reaction N(6)-carboxybiotinyl-L-lysyl-[protein] + acetyl-CoA = N(6)-biotinyl-L-lysyl-[protein] + malonyl-CoA. The protein operates within lipid metabolism; malonyl-CoA biosynthesis; malonyl-CoA from acetyl-CoA: step 1/1. Component of the acetyl coenzyme A carboxylase (ACC) complex. Biotin carboxylase (BC) catalyzes the carboxylation of biotin on its carrier protein (BCCP) and then the CO(2) group is transferred by the transcarboxylase to acetyl-CoA to form malonyl-CoA. This is Acetyl-coenzyme A carboxylase carboxyl transferase subunit beta, chloroplastic from Populus alba (White poplar).